An 88-amino-acid polypeptide reads, in one-letter code: MAKEELIELDGIVDEVLPDSRYRVTLDNGVVVGAYASGQMRRHRIRILAGDRVTLELSVYDLTKGRINFRHKDERRSDAAPRASARRR.

Positions 1 to 72 constitute an S1-like domain; the sequence is MAKEELIELD…TKGRINFRHK (72 aa).

The protein belongs to the IF-1 family. In terms of assembly, component of the 30S ribosomal translation pre-initiation complex which assembles on the 30S ribosome in the order IF-2 and IF-3, IF-1 and N-formylmethionyl-tRNA(fMet); mRNA recruitment can occur at any time during PIC assembly.

Its subcellular location is the cytoplasm. One of the essential components for the initiation of protein synthesis. Stabilizes the binding of IF-2 and IF-3 on the 30S subunit to which N-formylmethionyl-tRNA(fMet) subsequently binds. Helps modulate mRNA selection, yielding the 30S pre-initiation complex (PIC). Upon addition of the 50S ribosomal subunit IF-1, IF-2 and IF-3 are released leaving the mature 70S translation initiation complex. This Burkholderia mallei (strain ATCC 23344) protein is Translation initiation factor IF-1 1.